A 317-amino-acid chain; its full sequence is tRNA dimethylallyltransferase (317 aa).

16–23 (GPTASGKS) is a binding site for ATP. Position 18–23 (18–23 (TASGKS)) interacts with substrate. Interaction with substrate tRNA stretches follow at residues 41-44 (DSAQ), 165-169 (QRIQR), and 247-252 (RCVGYR).

The protein belongs to the IPP transferase family. Monomer. Mg(2+) is required as a cofactor.

It carries out the reaction adenosine(37) in tRNA + dimethylallyl diphosphate = N(6)-dimethylallyladenosine(37) in tRNA + diphosphate. Functionally, catalyzes the transfer of a dimethylallyl group onto the adenine at position 37 in tRNAs that read codons beginning with uridine, leading to the formation of N6-(dimethylallyl)adenosine (i(6)A). This is tRNA dimethylallyltransferase from Nitrosomonas eutropha (strain DSM 101675 / C91 / Nm57).